The sequence spans 247 residues: UPF0659 protein C216.03 (247 aa).

This sequence belongs to the UPF0659 family.

It localises to the cytoplasm. The protein localises to the nucleus. This is UPF0659 protein C216.03 from Schizosaccharomyces pombe (strain 972 / ATCC 24843) (Fission yeast).